The following is a 498-amino-acid chain: L-amino acid oxidase Cdc18 (498 aa).

Residues 1 to 2 (SC) form the signal peptide. Cys12 and Cys173 are oxidised to a cystine. FAD is bound by residues 45–46 (MA), 65–66 (EA), Arg73, and 87–90 (GPMR). Residues Arg90 and His223 each coordinate substrate. Val263 lines the FAD pocket. A disulfide bridge links Cys333 with Cys414. N-linked (GlcNAc...) asparagine glycosylation is present at Asn363. Residue Tyr374 coordinates substrate. FAD is bound by residues Glu459 and 466 to 471 (GWIDST). 466–467 (GW) provides a ligand contact to substrate.

The protein belongs to the flavin monoamine oxidase family. FIG1 subfamily. In terms of assembly, monomer. This is in contrast with most of its orthologs, that are non-covalently linked homodimers. Requires FAD as cofactor. In terms of tissue distribution, expressed by the venom gland.

It localises to the secreted. The enzyme catalyses an L-alpha-amino acid + O2 + H2O = a 2-oxocarboxylate + H2O2 + NH4(+). It carries out the reaction L-leucine + O2 + H2O = 4-methyl-2-oxopentanoate + H2O2 + NH4(+). Its function is as follows. Catalyzes an oxidative deamination of predominantly hydrophobic and aromatic L-amino acids, thus producing hydrogen peroxide that may contribute to the diverse toxic effects of this enzyme. Shows activity on L-Leu. Damages cell membranes of the Gram-positive bacteria S.aureus (MIC=8 ug/ml and MBC=16 ug/ml) and the Gram-negative bacteria A.baumannii (MIC=16 ug/ml and MBC=32 ug/ml). This antimicrobial activity is dependent on the production of hydrogen peroxyde, since it is inhibited by catalase, a hydrogen peroxyde scavenger. This chain is L-amino acid oxidase Cdc18, found in Crotalus durissus cumanensis (South American rattlesnake).